A 691-amino-acid chain; its full sequence is Elongation factor G (691 aa).

The region spanning 8–282 is the tr-type G domain; it reads ERVRNIGIAA…AVVDYLPAPV (275 aa). GTP-binding positions include 17-24, 81-85, and 135-138; these read AHIDAGKT, DTPGH, and NKMD.

It belongs to the TRAFAC class translation factor GTPase superfamily. Classic translation factor GTPase family. EF-G/EF-2 subfamily.

It is found in the cytoplasm. In terms of biological role, catalyzes the GTP-dependent ribosomal translocation step during translation elongation. During this step, the ribosome changes from the pre-translocational (PRE) to the post-translocational (POST) state as the newly formed A-site-bound peptidyl-tRNA and P-site-bound deacylated tRNA move to the P and E sites, respectively. Catalyzes the coordinated movement of the two tRNA molecules, the mRNA and conformational changes in the ribosome. This chain is Elongation factor G, found in Prochlorococcus marinus (strain MIT 9515).